Consider the following 100-residue polypeptide: MKITQEEVSHVAKLSKLAFSPEETAEFATTLTKIVDMVELLNEVDTEGVPFTSNVAANINYMREDVAQPGWNREELFQNVPEKERGYIKVPAILDDGGDA.

This sequence belongs to the GatC family. In terms of assembly, heterotrimer of A, B and C subunits.

It carries out the reaction L-glutamyl-tRNA(Gln) + L-glutamine + ATP + H2O = L-glutaminyl-tRNA(Gln) + L-glutamate + ADP + phosphate + H(+). The enzyme catalyses L-aspartyl-tRNA(Asn) + L-glutamine + ATP + H2O = L-asparaginyl-tRNA(Asn) + L-glutamate + ADP + phosphate + 2 H(+). Functionally, allows the formation of correctly charged Asn-tRNA(Asn) or Gln-tRNA(Gln) through the transamidation of misacylated Asp-tRNA(Asn) or Glu-tRNA(Gln) in organisms which lack either or both of asparaginyl-tRNA or glutaminyl-tRNA synthetases. The reaction takes place in the presence of glutamine and ATP through an activated phospho-Asp-tRNA(Asn) or phospho-Glu-tRNA(Gln). This Streptococcus sanguinis (strain SK36) protein is Aspartyl/glutamyl-tRNA(Asn/Gln) amidotransferase subunit C.